A 347-amino-acid polypeptide reads, in one-letter code: NADH-ubiquinone oxidoreductase chain 2 (347 aa).

Transmembrane regions (helical) follow at residues 13–33 (IFTG…WVGL), 60–80 (FLTQ…NSML), 96–116 (LMIM…FWVP), 123–143 (PLMS…SIMY), 149–169 (LNVN…SWGG), 178–198 (ILAY…PYNP), 201–221 (TILN…LLNL), 247–267 (TLLS…WVII), 274–294 (NSLI…YFYL), and 326–346 (LPTL…MLMI).

The protein belongs to the complex I subunit 2 family. Core subunit of respiratory chain NADH dehydrogenase (Complex I) which is composed of 45 different subunits. Interacts with TMEM242.

The protein localises to the mitochondrion inner membrane. The enzyme catalyses a ubiquinone + NADH + 5 H(+)(in) = a ubiquinol + NAD(+) + 4 H(+)(out). In terms of biological role, core subunit of the mitochondrial membrane respiratory chain NADH dehydrogenase (Complex I) which catalyzes electron transfer from NADH through the respiratory chain, using ubiquinone as an electron acceptor. Essential for the catalytic activity and assembly of complex I. The polypeptide is NADH-ubiquinone oxidoreductase chain 2 (Pan troglodytes (Chimpanzee)).